A 230-amino-acid chain; its full sequence is CRP-like protein Clp (230 aa).

18 to 139 (PSLTLDAGTI…APRILYAIGV (122 aa)) contacts a nucleoside 3',5'-cyclic phosphate. The HTH crp-type domain maps to 158–230 (LDVTDRIVRT…GKTVVLYGTR (73 aa)). Residues 190 to 209 (RQELARLVGCSREMAGRVLK) constitute a DNA-binding region (H-T-H motif).

Homodimer.

It localises to the cytoplasm. With respect to regulation, allosterically inhibited by cyclic di-GMP (c-di-GMP), which binds to Clp and abolishes its ability to bind its target gene promoter. Functionally, global transcriptional regulator that regulates virulence factors production by activating or repressing the expression of a large set of genes in diffusible signal factor (DSF) pathway. The sequence is that of CRP-like protein Clp (clp) from Xanthomonas campestris pv. campestris (strain 8004).